The chain runs to 327 residues: DNA-directed RNA polymerase subunit alpha (327 aa).

The segment at 1 to 233 (MQNVLKSFLT…HQLAAFVDLK (233 aa)) is alpha N-terminal domain (alpha-NTD). Positions 247-327 (VNPLLLRPVE…GWPPADLTDQ (81 aa)) are alpha C-terminal domain (alpha-CTD).

The protein belongs to the RNA polymerase alpha chain family. As to quaternary structure, homodimer. The RNAP catalytic core consists of 2 alpha, 1 beta, 1 beta' and 1 omega subunit. When a sigma factor is associated with the core the holoenzyme is formed, which can initiate transcription.

The enzyme catalyses RNA(n) + a ribonucleoside 5'-triphosphate = RNA(n+1) + diphosphate. Functionally, DNA-dependent RNA polymerase catalyzes the transcription of DNA into RNA using the four ribonucleoside triphosphates as substrates. The polypeptide is DNA-directed RNA polymerase subunit alpha (Coxiella burnetii (strain CbuK_Q154) (Coxiella burnetii (strain Q154))).